The primary structure comprises 211 residues: Proteasome subunit beta (211 aa).

Positions 1-9 (MDNDKYLKG) are cleaved as a propeptide — removed in mature form; by autocatalysis. The active-site Nucleophile is the Thr-10.

It belongs to the peptidase T1B family. As to quaternary structure, the 20S proteasome core is composed of 14 alpha and 14 beta subunits that assemble into four stacked heptameric rings, resulting in a barrel-shaped structure. The two inner rings, each composed of seven catalytic beta subunits, are sandwiched by two outer rings, each composed of seven alpha subunits. The catalytic chamber with the active sites is on the inside of the barrel. Has a gated structure, the ends of the cylinder being occluded by the N-termini of the alpha-subunits. Is capped at one or both ends by the proteasome regulatory ATPase, PAN.

The protein localises to the cytoplasm. The catalysed reaction is Cleavage of peptide bonds with very broad specificity.. With respect to regulation, the formation of the proteasomal ATPase PAN-20S proteasome complex, via the docking of the C-termini of PAN into the intersubunit pockets in the alpha-rings, triggers opening of the gate for substrate entry. Interconversion between the open-gate and close-gate conformations leads to a dynamic regulation of the 20S proteasome proteolysis activity. Functionally, component of the proteasome core, a large protease complex with broad specificity involved in protein degradation. The chain is Proteasome subunit beta from Methanosarcina barkeri (strain Fusaro / DSM 804).